Consider the following 152-residue polypeptide: D-aminoacyl-tRNA deacylase (152 aa).

The Gly-cisPro motif, important for rejection of L-amino acids signature appears at 138 to 139 (GP).

It belongs to the DTD family. As to quaternary structure, homodimer.

It localises to the cytoplasm. The catalysed reaction is glycyl-tRNA(Ala) + H2O = tRNA(Ala) + glycine + H(+). The enzyme catalyses a D-aminoacyl-tRNA + H2O = a tRNA + a D-alpha-amino acid + H(+). Functionally, an aminoacyl-tRNA editing enzyme that deacylates mischarged D-aminoacyl-tRNAs. Also deacylates mischarged glycyl-tRNA(Ala), protecting cells against glycine mischarging by AlaRS. Acts via tRNA-based rather than protein-based catalysis; rejects L-amino acids rather than detecting D-amino acids in the active site. By recycling D-aminoacyl-tRNA to D-amino acids and free tRNA molecules, this enzyme counteracts the toxicity associated with the formation of D-aminoacyl-tRNA entities in vivo and helps enforce protein L-homochirality. The sequence is that of D-aminoacyl-tRNA deacylase from Chloroherpeton thalassium (strain ATCC 35110 / GB-78).